The sequence spans 821 residues: Enhancer of polycomb-like protein 1 (821 aa).

Polar residues predominate over residues 1 to 12 (MSSNGGSNTNER). Disordered regions lie at residues 1-43 (MSSN…TRFR), 427-485 (KAAA…QPAM), and 779-799 (QFLQQQQENGSPNNATMPINP). 2 stretches are compositionally biased toward low complexity: residues 18–39 (SGSLRSNSNLSSVNGDGSDSGS) and 449–465 (EQAAKVKSSKQKNSSSQ). Residues 786-799 (ENGSPNNATMPINP) are compositionally biased toward polar residues.

It belongs to the enhancer of polycomb family. Component of the NuA4 histone acetyltransferase complex.

It is found in the nucleus. In terms of biological role, component of the NuA4 histone acetyltransferase complex which is involved in transcriptional activation of selected genes principally by acetylation of nucleosomal histone H4 and H2A. The NuA4 complex is also involved in DNA repair. Involved in gene silencing by neighboring heterochromatin, blockage of the silencing spreading along the chromosome, and required for cell cycle progression through G2/M. This Candida glabrata (strain ATCC 2001 / BCRC 20586 / JCM 3761 / NBRC 0622 / NRRL Y-65 / CBS 138) (Yeast) protein is Enhancer of polycomb-like protein 1 (EPL1).